Consider the following 79-residue polypeptide: Large ribosomal subunit protein bL31c (79 aa).

Belongs to the bacterial ribosomal protein bL31 family. Type A subfamily. As to quaternary structure, part of the 50S ribosomal subunit.

It localises to the plastid. The protein resides in the chloroplast. Its function is as follows. Binds the 23S rRNA. This Gracilaria tenuistipitata var. liui (Red alga) protein is Large ribosomal subunit protein bL31c.